A 116-amino-acid polypeptide reads, in one-letter code: Nicotine metabolites export pump subunit NepA (116 aa).

The next 4 membrane-spanning stretches (helical) occupy residues 10–30 (LTIW…TSLL), 42–62 (TVAV…ILKF), 67–87 (IAYA…GVLF), and 92–112 (FSWK…TLNL).

It belongs to the drug/metabolite transporter (DMT) superfamily. Small multidrug resistance (SMR) (TC 2.A.7.1) family. NepA/NepB subfamily. In terms of assembly, the efflux pump is composed of NepA and NepB.

Its subcellular location is the cell membrane. Functionally, component of an efflux pump responsible for the transport of nicotine breakdown products, in particular methylamine, out of the cell. This pump apparently serves as a metabolic valve for nicotine catabolites and may protect the bacteria from the potentially toxic side effects of these compounds. The protein is Nicotine metabolites export pump subunit NepA (nepA) of Paenarthrobacter nicotinovorans (Arthrobacter nicotinovorans).